The primary structure comprises 231 residues: Large ribosomal subunit protein uL1 (231 aa).

The protein belongs to the universal ribosomal protein uL1 family. As to quaternary structure, part of the 50S ribosomal subunit.

In terms of biological role, binds directly to 23S rRNA. The L1 stalk is quite mobile in the ribosome, and is involved in E site tRNA release. Protein L1 is also a translational repressor protein, it controls the translation of the L11 operon by binding to its mRNA. The protein is Large ribosomal subunit protein uL1 of Nitrosococcus oceani (strain ATCC 19707 / BCRC 17464 / JCM 30415 / NCIMB 11848 / C-107).